A 479-amino-acid chain; its full sequence is Protein C-ets-2 (479 aa).

Residues 88–173 form the PNT domain; that stretch reads DTFSGFTKEQ…EHLEQMIKDS (86 aa). Positions 373–453 form a DNA-binding region, ETS; sequence IQLWQFLLEL…SGKRYVYRFV (81 aa).

This sequence belongs to the ETS family.

It is found in the nucleus. In terms of biological role, probable transcription factor. The protein is Protein C-ets-2 (ETS2) of Gallus gallus (Chicken).